The sequence spans 993 residues: Testis-expressed protein 13C (993 aa).

Disordered regions lie at residues 281-381, 520-547, and 894-959; these read QEET…SLKK, DSKS…SHSL, and FSKS…PVNW. The span at 325–335 shows a compositional bias: polar residues; sequence GMTSQGDSSSH. Positions 353–364 are enriched in basic and acidic residues; that stretch reads SRSHSLEKKPVM. Polar residues predominate over residues 944–957; sequence ESQQQKPASCSSPV. Residues 955–984 form a RanBP2-type zinc finger; sequence SPVNWACPWCNAMNFPRNKVCSKCKRVRMP.

This sequence belongs to the TEX13 family.

This chain is Testis-expressed protein 13C, found in Homo sapiens (Human).